Here is a 1131-residue protein sequence, read N- to C-terminus: Phytochrome a (1131 aa).

The segment covering methionine 1–arginine 23 has biased composition (low complexity). Residues methionine 1–alanine 26 are disordered. Residues serine 219–phenylalanine 404 form the GAF domain. Cysteine 324 lines the phytochromobilin pocket. PAS domains follow at residues valine 620 to lysine 690 and valine 750 to glutamate 834. Residues tyrosine 904–alanine 1124 form the Histidine kinase domain.

It belongs to the phytochrome family. Homodimer. In terms of processing, contains one covalently linked phytochromobilin chromophore.

Its function is as follows. Regulatory photoreceptor which exists in two forms that are reversibly interconvertible by light: the Pr form that absorbs maximally in the red region of the spectrum and the Pfr form that absorbs maximally in the far-red region. Photoconversion of Pr to Pfr induces an array of morphogenic responses, whereas reconversion of Pfr to Pr cancels the induction of those responses. Pfr controls the expression of a number of nuclear genes including those encoding the small subunit of ribulose-bisphosphate carboxylase, chlorophyll A/B binding protein, protochlorophyllide reductase, rRNA, etc. It also controls the expression of its own gene(s) in a negative feedback fashion. This is Phytochrome a (PHYA) from Sorghum bicolor (Sorghum).